Consider the following 61-residue polypeptide: Small ribosomal subunit protein uS14 (61 aa).

Positions 24, 27, 40, and 43 each coordinate Zn(2+).

Belongs to the universal ribosomal protein uS14 family. Zinc-binding uS14 subfamily. In terms of assembly, part of the 30S ribosomal subunit. Contacts proteins S3 and S10. The cofactor is Zn(2+).

Functionally, binds 16S rRNA, required for the assembly of 30S particles and may also be responsible for determining the conformation of the 16S rRNA at the A site. The sequence is that of Small ribosomal subunit protein uS14 from Beutenbergia cavernae (strain ATCC BAA-8 / DSM 12333 / CCUG 43141 / JCM 11478 / NBRC 16432 / NCIMB 13614 / HKI 0122).